Reading from the N-terminus, the 168-residue chain is Photosystem I assembly protein Ycf3 (168 aa).

TPR repeat units lie at residues Ala35–Pro68, Ser72–Leu105, and Gly120–Asn153.

It belongs to the Ycf3 family.

Its subcellular location is the plastid. It localises to the chloroplast thylakoid membrane. Its function is as follows. Essential for the assembly of the photosystem I (PSI) complex. May act as a chaperone-like factor to guide the assembly of the PSI subunits. This chain is Photosystem I assembly protein Ycf3, found in Panax ginseng (Korean ginseng).